We begin with the raw amino-acid sequence, 209 residues long: Large ribosomal subunit protein uL3 (209 aa).

A disordered region spans residues 133–152 (THGNSLSHRVPGSIGQNQTP). Gln150 is subject to N5-methylglutamine.

It belongs to the universal ribosomal protein uL3 family. Part of the 50S ribosomal subunit. Forms a cluster with proteins L14 and L19. Post-translationally, methylated by PrmB.

One of the primary rRNA binding proteins, it binds directly near the 3'-end of the 23S rRNA, where it nucleates assembly of the 50S subunit. The polypeptide is Large ribosomal subunit protein uL3 (Shigella sonnei (strain Ss046)).